A 510-amino-acid polypeptide reads, in one-letter code: GMP synthase [glutamine-hydrolyzing] (510 aa).

One can recognise a Glutamine amidotransferase type-1 domain in the interval 5–194; it reads DILVLDFGSQ…FAKICGCEST (190 aa). The active-site Nucleophile is Cys-82. Catalysis depends on residues His-169 and Glu-171. Residues 195-385 form the GMPS ATP-PPase domain; the sequence is WNMGSFAKKE…LGLSRDIVYR (191 aa). 222–228 is an ATP binding site; the sequence is SGGVDSS.

Homodimer.

It carries out the reaction XMP + L-glutamine + ATP + H2O = GMP + L-glutamate + AMP + diphosphate + 2 H(+). It participates in purine metabolism; GMP biosynthesis; GMP from XMP (L-Gln route): step 1/1. Functionally, catalyzes the synthesis of GMP from XMP. The polypeptide is GMP synthase [glutamine-hydrolyzing] (Campylobacter fetus subsp. fetus (strain 82-40)).